A 260-amino-acid chain; its full sequence is MINKVLLEGQRITRSPQVKQHACGASFFLVVLLLIGGLLYSTISWMWDEQRLPLSKLVLQGDLHYVSALDVQRVLARLDHIGTFMSQDINVLQESVQSIPWVSHASIRKQWPDTIKVYLTEYQVEALWNANALLDKNGTVFYGDIARVNGEYVKLYGPDGTAPQVLKAWRDYNPKFAQLGLNISSLVLNDRRAWQIILDNGIRLELGKESLEERISRFFLLYKQLGNKAEQVSYIDLRYDTGAAVGWFPEQELTQEKNDD.

Residues 1-26 (MINKVLLEGQRITRSPQVKQHACGAS) are Cytoplasmic-facing. Residues 27–47 (FFLVVLLLIGGLLYSTISWMW) traverse the membrane as a helical segment. The Periplasmic segment spans residues 48 to 260 (DEQRLPLSKL…QELTQEKNDD (213 aa)). The 71-residue stretch at 52–122 (LPLSKLVLQG…DTIKVYLTEY (71 aa)) folds into the POTRA domain.

This sequence belongs to the FtsQ/DivIB family. FtsQ subfamily. In terms of assembly, part of a complex composed of FtsB, FtsL and FtsQ.

The protein resides in the cell inner membrane. Essential cell division protein. May link together the upstream cell division proteins, which are predominantly cytoplasmic, with the downstream cell division proteins, which are predominantly periplasmic. May control correct divisome assembly. The protein is Cell division protein FtsQ of Vibrio cholerae serotype O1 (strain ATCC 39315 / El Tor Inaba N16961).